We begin with the raw amino-acid sequence, 508 residues long: Cytochrome P450 monooxygenase dmxR5 (508 aa).

A helical membrane pass occupies residues 24–44 (LTLGLGAILVVLMSFLAFLSY). N-linked (GlcNAc...) asparagine glycosylation is found at Asn387 and Asn405. Cys451 lines the heme pocket. A glycan (N-linked (GlcNAc...) asparagine) is linked at Asn462. Residues 481–508 (EHKKSTQESGHGVPLPSKLSKFSPREEN) are disordered.

It belongs to the cytochrome P450 family. Heme serves as cofactor.

The protein localises to the membrane. The protein operates within secondary metabolite biosynthesis. Cytochrome P450 monooxygenase; part of the gene cluster that mediates the biosynthesis of the dimeric xanthones cryptosporioptides. The pathway begins with the synthesis of atrochrysone thioester by the polyketide synthase dmx-nrPKS. The atrochrysone carboxyl ACP thioesterase dmxR1 then breaks the thioester bond and releases the atrochrysone carboxylic acid from dmx-nrPKS. Atrochrysone carboxylic acid is decarboxylated by the decarboxylase dmxR15, and oxidized by the anthrone oxygenase dmxR16 to yield emodin. Emodin is then reduced to emodin hydroquinone by the oxidoreductase dmxR7. A-ring reduction by the short chain dehydrogenase dmxR18, dehydration by the scytalone dehydratase-like protein dmxR17 and probable spontaneous re-oxidation, results in overall deoxygenation to chrysophanol. Baeyer-Villiger oxidation by the Baeyer-Villiger monooxygenase (BVMO) dmxR6 then yields monodictylactone in equilibrium with monodictyphenone. In the case of the cryptosporioptides biosynthesis, monodictylactone is reduced at C-12 to an alcohol (by the short chain dehydrogenases dmxR12 or dmxR8) and hydroxylated at C-5 by dmxR9, yielding the electron-rich aromatic which could eliminate H(2)O to form the ortho-quinonemethide, followed by tautomerisation to paraquinone and complete the formal reduction to produce the 10-methylgroup. Conjugate addition of C-4a-OH to the resulting paraquinone by the monooxygenase dmxR10 then gives cyclohexadienone, which is then reduced at C-5 by the short chain dehydrogenase dmxR3 to give the dihydroxanthone. The 6,7-epoxide in the cryptosporioptides could be introduced by the cytochrome P450 monooxygenase dmxL3. The highly reducing PKS dmxL2 manufactures butyrate, which is further carboxylated by dmxL1 to form ethylmalonate. It is not yet clear whether the carboxylation occurs while the butyrate is attached to the ACP of dmxL2, but this unusual fungal metabolite could then be esterified to O-5 by the O-acetyltransferase dmxR13. Finally, dimerization performed by dmxR5 gives the observed dimers cryptosporioptides A, B and C as the final products of the pathway. The protein is Cytochrome P450 monooxygenase dmxR5 of Cryptosporiopsis sp. (strain 8999).